Reading from the N-terminus, the 61-residue chain is DNA gyrase inhibitor YacG (61 aa).

Residues Cys14, Cys17, Cys29, and Cys33 each contribute to the Zn(2+) site.

It belongs to the DNA gyrase inhibitor YacG family. Interacts with GyrB. It depends on Zn(2+) as a cofactor.

In terms of biological role, inhibits all the catalytic activities of DNA gyrase by preventing its interaction with DNA. Acts by binding directly to the C-terminal domain of GyrB, which probably disrupts DNA binding by the gyrase. The chain is DNA gyrase inhibitor YacG from Zymomonas mobilis subsp. mobilis (strain ATCC 31821 / ZM4 / CP4).